The following is a 624-amino-acid chain: Pheromone-processing carboxypeptidase kex1 (624 aa).

Residues 1–18 form the signal peptide; it reads MLGKALLLLLSSPICALA. Topologically, residues 19–504 are lumenal; sequence QSAADYYVKS…KDAEWKAYAK (486 aa). N-linked (GlcNAc...) asparagine glycosylation occurs at N106. Active-site residues include S170 and D370. N-linked (GlcNAc...) asparagine glycosylation is found at N421 and N429. The active site involves H432. The interval 461–491 is disordered; that stretch reads PADSRLDGEKLPQTSVGNTTSSTSESDQVDQ. Residues 472–486 are compositionally biased toward polar residues; sequence PQTSVGNTTSSTSES. Residue N478 is glycosylated (N-linked (GlcNAc...) asparagine). The chain crosses the membrane as a helical span at residues 505-525; sequence SGEAALIVVIIGVSVWGFFIW. The Cytoplasmic segment spans residues 526-624; that stretch reads RARQRASRGS…IGNGAKSSLH (99 aa). A disordered region spans residues 533–624; that stretch reads RGSSPSKKGY…IGNGAKSSLH (92 aa). Over residues 565 to 575 the composition is skewed to polar residues; it reads FRNNTNNNASS. The segment covering 606 to 615 has biased composition (acidic residues); that stretch reads GEEDEEDEDI.

This sequence belongs to the peptidase S10 family.

It is found in the golgi apparatus. Its subcellular location is the trans-Golgi network membrane. The enzyme catalyses Preferential release of a C-terminal arginine or lysine residue.. Functionally, protease with a carboxypeptidase B-like function involved in the C-terminal processing of the lysine and arginine residues from protein precursors. Promotes cell fusion and is involved in the programmed cell death. This chain is Pheromone-processing carboxypeptidase kex1 (kex1), found in Talaromyces stipitatus (strain ATCC 10500 / CBS 375.48 / QM 6759 / NRRL 1006) (Penicillium stipitatum).